Here is a 1846-residue protein sequence, read N- to C-terminus: Peripheral-type benzodiazepine receptor-associated protein 1 (1846 aa).

Disordered stretches follow at residues 57 to 97, 281 to 318, and 560 to 628; these read EESS…GYSC, NQRE…DDVE, and GPKD…SEVE. A compositionally biased stretch (polar residues) spans 576-587; that stretch reads PKSSEPALTTLT. Low complexity predominate over residues 599 to 612; the sequence is SLSNSSRSESIHNS. Positions 649–716 constitute an SH3 1 domain; that stretch reads ARIQVFLARY…PSNFVERVSD (68 aa). Residues 726 to 785 are disordered; it reads ELADSSHSSGPELSFLSGGGGGCSSGGQSSGGRSQPRPEEEAAGDELSLSPPPEGLGEPL. Residues 742–755 are compositionally biased toward gly residues; it reads SGGGGGCSSGGQSS. Fibronectin type-III domains lie at 787 to 878, 880 to 972, and 977 to 1075; these read VPYP…AGAG, VPSQ…TLPA, and APLD…PALA. 7 disordered regions span residues 1084–1107, 1163–1219, 1243–1302, 1322–1476, 1492–1617, 1704–1755, and 1812–1846; these read SCLS…GLGD, EPTL…LDSG, HSRN…SDEE, SIPE…PESS, YDSE…QDLP, LTEA…AAQK, and VPSN…RVQC. The segment covering 1202-1219 has biased composition (basic and acidic residues); the sequence is TQKKPSIEACHGGDLDSG. Residues 1251 to 1265 show a composition bias toward acidic residues; it reads DIQEEEEEEEEEEEE. A compositionally biased stretch (polar residues) spans 1270 to 1283; sequence PCSSQKQVAGNSIR. Residues 1324–1335 are compositionally biased toward acidic residues; that stretch reads PEEEEEEEEEEG. 2 stretches are compositionally biased toward basic and acidic residues: residues 1411 to 1420 and 1545 to 1577; these read RPQDPREHCS and AWEK…ESRG. Residues 1616–1684 enclose the SH3 2 domain; it reads LPVRVFVALF…PCNMVAEVAV (69 aa). Residues 1705-1719 show a composition bias toward polar residues; sequence TEASGNGPSVYSSAH. Positions 1755–1822 constitute an SH3 3 domain; sequence KTSRPMVAAF…PSNFLEGPGP (68 aa). A compositionally biased stretch (low complexity) spans 1817 to 1830; the sequence is LEGPGPESGSLESG.

The protein belongs to the RIMBP family. As to quaternary structure, interacts with RIMS1 and RIMS2. Interacts with TSPO. Interacts with CACNA1A. Predominantly expressed in the brain.

It localises to the cytoplasm. Its subcellular location is the mitochondrion. Its function is as follows. Required for synaptic transmission regulation. It probably controls the recruitement of voltage-gated calcium channels to the presynaptic membrane, and modulates neurotransmitter release. This chain is Peripheral-type benzodiazepine receptor-associated protein 1, found in Mus musculus (Mouse).